Reading from the N-terminus, the 282-residue chain is Homeobox protein Hox-C12 (282 aa).

Disordered regions lie at residues 94 to 129 (YYRE…PLEP) and 147 to 214 (GGDG…NSRS). Residues 162–175 (SCQSLESDSSSSLL) are compositionally biased toward low complexity. The homeobox DNA-binding region spans 214 to 273 (SRKKRKPYSKLQLAELEGEFLVNEFITRQRRRELSDRLNLSDQQVKIWFQNRRMKKKRLL).

It belongs to the Abd-B homeobox family.

The protein resides in the nucleus. Its function is as follows. Sequence-specific transcription factor which is part of a developmental regulatory system that provides cells with specific positional identities on the anterior-posterior axis. The chain is Homeobox protein Hox-C12 (HOXC12) from Homo sapiens (Human).